A 298-amino-acid chain; its full sequence is 2-dehydro-3-deoxy-D-arabinonate dehydratase (298 aa).

Ile86 provides a ligand contact to substrate. Mg(2+) contacts are provided by Glu148, Glu150, and Asp169. Residues Lys187 and Thr261 each coordinate substrate.

This sequence belongs to the FAH family. As to quaternary structure, homotetramer. Requires Mg(2+) as cofactor. The cofactor is Ca(2+).

The catalysed reaction is 2-dehydro-3-deoxy-D-arabinonate = 2,5-dioxopentanoate + H2O. Functionally, participates in a pentose oxidation pathway that converts D-arabinonate to 2-oxoglutarate. The sequence is that of 2-dehydro-3-deoxy-D-arabinonate dehydratase from Saccharolobus solfataricus (strain ATCC 35092 / DSM 1617 / JCM 11322 / P2) (Sulfolobus solfataricus).